Consider the following 585-residue polypeptide: Rab GTPase-binding effector protein 2 (585 aa).

Ala2 bears the N-acetylalanine mark. Positions 27–183 form a coiled coil; it reads QEGAKVEAES…ELIQEIQRRP (157 aa). Disordered regions lie at residues 178 to 265, 381 to 408, and 491 to 515; these read EIQR…ASLV, ENQG…EESL, and EEQS…EEAQ. A phosphoserine mark is found at Ser188, Ser192, Ser198, and Ser202. Positions 288 to 540 form a coiled coil; sequence NQWEQLQLEG…QAELETSEQV (253 aa). Residues 491–501 are compositionally biased toward basic and acidic residues; it reads EEQSKAKRQEV.

Belongs to the rabaptin family. In terms of assembly, heterodimer with RABGEF1. The dimer binds RAB5A that has been activated by GTP-binding. Interacts with SDCCAG8; this interaction is important for ciliogenesis regulation. Interacts with RAB4; this interaction may mediate VEGFR2 cell surface expression.

The protein localises to the cytoplasm. It localises to the early endosome. The protein resides in the cytoskeleton. It is found in the microtubule organizing center. Its subcellular location is the centrosome. The protein localises to the cilium basal body. Functionally, plays a role in membrane trafficking and in homotypic early endosome fusion. Participates in arteriogenesis by regulating vascular endothelial growth factor receptor 2/VEGFR2 cell surface expression and endosomal trafficking. By interacting with SDCCAG8, localizes to centrosomes and plays a critical role in ciliogenesis. The protein is Rab GTPase-binding effector protein 2 (RABEP2) of Bos taurus (Bovine).